We begin with the raw amino-acid sequence, 182 residues long: Oligoribonuclease (182 aa).

The 164-residue stretch at 8–171 (LLWLDMEMTG…ADIYESIDEL (164 aa)) folds into the Exonuclease domain. The active site involves Tyr129.

Belongs to the oligoribonuclease family.

The protein resides in the cytoplasm. In terms of biological role, 3'-to-5' exoribonuclease specific for small oligoribonucleotides. The chain is Oligoribonuclease from Thiobacillus denitrificans (strain ATCC 25259 / T1).